Here is a 353-residue protein sequence, read N- to C-terminus: Protein Wnt-11b (353 aa).

Residues 1–22 (MAPTRHWVTPLLLLCCSGICGA) form the signal peptide. 3 N-linked (GlcNAc...) asparagine glycosylation sites follow: Asn-31, Asn-38, and Asn-88. Intrachain disulfides connect Cys-78–Cys-89, Cys-128–Cys-136, Cys-138–Cys-155, Cys-208–Cys-222, and Cys-210–Cys-217. Ser-214 carries O-palmitoleoyl serine; by PORCN lipidation. Sulfotyrosine is present on residues Tyr-274 and Tyr-281. Intrachain disulfides connect Cys-282–Cys-313, Cys-298–Cys-308, Cys-312–Cys-352, Cys-328–Cys-343, Cys-330–Cys-340, and Cys-335–Cys-336. Asn-299 is a glycosylation site (N-linked (GlcNAc...) asparagine).

It belongs to the Wnt family. As to quaternary structure, homodimer. Secreted homodimers form a complex with wnt5a homodimers; tyrosine sulfation of both wnt11 and wnt5a by tpst1 is required for this interaction. Interacts with the transmembrane receptor fzd7/fz7. Interacts with lrp6 and ryk. Interacts with tdgf1/frl1. Interacts weakly with frzb1 and strongly with frzb2/crescent. Interaction with frzb2/crescent antagonizes wnt11 function in the neuroectoderm, but enhances it in mesodermal tissue. Glycosylation is required for protein secretion. In terms of processing, palmitoleoylation is required for efficient binding to frizzled receptors. Depalmitoleoylation leads to Wnt signaling pathway inhibition. Transcripts are expressed ubiquitously in early oocytes but become vegetally localized during mid-oogenesis then enriched on the dorsal side by the 8 to 16 cell stage. The protein becomes asymmetrically concentrated on the dorsal side by the 64-cell stage. During gastrulation, expressed in the lateral and ventral marginal zone, and during tadpole stages in the somites and first branchial arch. Weakly expressed in the pronephros from at least stage 12.5, with kidney expression increasing until stage 35. Expressed in the prospective posterior gut between stages 13 and 20, and in the deep foregut endoderm. Prior to neural crest cell migration, expressed in a domain flanking the neural crest on the lateral or epidermal side (the opposite side to wnt11/wnt11-r).

Its subcellular location is the secreted. It is found in the extracellular space. It localises to the extracellular matrix. Its function is as follows. Ligand for the frizzled7 transmembrane receptor. Primarily acts via non-canonical Wnt pathways mediated by either Ca(2+) and PKC, or by JNK and dvl2/dsh. Depending on the cellular context, can also signal via the canonical Wnt pathway mediated by beta-catenin and dvl2/dsh. May also inhibit canonical Wnt signaling. Maternally initiates dorsal/ventral axis formation by a canonical route, which signals via lrp6. In a complex with wnt5a, activates the canonical and non-canonical processes involved in axis formation. In the non-canonical pathway, acts through fzd7/fz7 to induce phosphorylation of dvl2/dsh. Signals through a non-canonical Wnt pathway to regulate convergent extension movements during gastrulation. Interactions with the secreted Wnt antagonist sfrp5 to coordinate foregut development, acting via a non-canonical Wnt pathway whereby sfrp5 restricts wnt11b activity to prevent inappropriate foregut formation. Mediates cardiogenesis via non-canonical Wnt signaling involving JNK-activation and PKC. Acts redundantly with wnt11/wnt11r during pronephros induction. This Xenopus laevis (African clawed frog) protein is Protein Wnt-11b (wnt11b).